The sequence spans 359 residues: S-adenosylmethionine:tRNA ribosyltransferase-isomerase (359 aa).

This sequence belongs to the QueA family. As to quaternary structure, monomer.

It is found in the cytoplasm. The catalysed reaction is 7-aminomethyl-7-carbaguanosine(34) in tRNA + S-adenosyl-L-methionine = epoxyqueuosine(34) in tRNA + adenine + L-methionine + 2 H(+). It participates in tRNA modification; tRNA-queuosine biosynthesis. In terms of biological role, transfers and isomerizes the ribose moiety from AdoMet to the 7-aminomethyl group of 7-deazaguanine (preQ1-tRNA) to give epoxyqueuosine (oQ-tRNA). This Synechococcus elongatus (strain ATCC 33912 / PCC 7942 / FACHB-805) (Anacystis nidulans R2) protein is S-adenosylmethionine:tRNA ribosyltransferase-isomerase.